Reading from the N-terminus, the 494-residue chain is V-type proton ATPase subunit B (494 aa).

An ATP-binding site is contributed by R384.

The protein belongs to the ATPase alpha/beta chains family. As to quaternary structure, V-ATPase is a heteromultimeric enzyme made up of two complexes: the ATP-hydrolytic V1 complex and the proton translocation V0 complex. The V1 complex consists of three catalytic AB heterodimers that form a heterohexamer, three peripheral stalks each consisting of EG heterodimers, one central rotor including subunits D and F, and the regulatory subunits C and H. The proton translocation complex V0 consists of the proton transport subunit a, a ring of proteolipid subunits c9c'', rotary subunit d, subunits e and f, and the accessory subunits VhaAC45 and ATP6AP2.

Its function is as follows. Non-catalytic subunit of the V1 complex of vacuolar(H+)-ATPase (V-ATPase), a multisubunit enzyme composed of a peripheral complex (V1) that hydrolyzes ATP and a membrane integral complex (V0) that translocates protons. V-ATPase is responsible for acidifying and maintaining the pH of intracellular compartments and in some cell types, is targeted to the plasma membrane, where it is responsible for acidifying the extracellular environment. Essential for the proper assembly and activity of V-ATPase. The protein is V-type proton ATPase subunit B (VHA55) of Heliothis virescens (Tobacco budworm moth).